The primary structure comprises 477 residues: Glycogen synthase (477 aa).

Lysine 15 is a binding site for ADP-alpha-D-glucose.

It belongs to the glycosyltransferase 1 family. Bacterial/plant glycogen synthase subfamily.

It catalyses the reaction [(1-&gt;4)-alpha-D-glucosyl](n) + ADP-alpha-D-glucose = [(1-&gt;4)-alpha-D-glucosyl](n+1) + ADP + H(+). The protein operates within glycan biosynthesis; glycogen biosynthesis. Its function is as follows. Synthesizes alpha-1,4-glucan chains using ADP-glucose. The sequence is that of Glycogen synthase from Escherichia coli O139:H28 (strain E24377A / ETEC).